Reading from the N-terminus, the 289-residue chain is MSNRPELLAPPEIFYDDTEARKYTSSSRIVEIQAKLSERALELLALPEDGVPRFLLDIGCGSGLSGETLSEDGHHWIGLDISASMLHVAVEREVEGDLLLGDMGQGLGLRSGVIDGAISISAVQWLCNADKSSHEPRLRLKAFFGSLYRCLSRGARAVFQVYPENIAQRELILRQALQAGFGGGLVVDYPHSTKKRKEFLVLTCGTVQTSIQTSKNEYDESCSEDDNSDDEESEEVGVSDRNRPRKRQRTNTKVKGREWVLRKKEQSRRKGKNVPADSKFTSRKRRTRF.

A disordered region spans residues 215-289 (KNEYDESCSE…FTSRKRRTRF (75 aa)). Positions 219–237 (DESCSEDDNSDDEESEEVG) are enriched in acidic residues. A compositionally biased stretch (basic residues) spans 243–254 (RPRKRQRTNTKV). Residues 255–264 (KGREWVLRKK) show a composition bias toward basic and acidic residues. Residues 268–275 (RRKGKNVP) carry the Nuclear localization signal motif.

This sequence belongs to the class I-like SAM-binding methyltransferase superfamily. BUD23/WBSCR22 family. In terms of tissue distribution, expressed in seedlings, roots and flowers.

Its subcellular location is the nucleus. The protein localises to the nucleoplasm. The protein resides in the cytoplasm. It is found in the perinuclear region. It localises to the nucleolus. The enzyme catalyses guanosine(1575) in yeast 18S rRNA + S-adenosyl-L-methionine = N(7)-methylguanosine(1575) in yeast 18S rRNA + S-adenosyl-L-homocysteine. In terms of biological role, essential protein. S-adenosyl-L-methionine-dependent methyltransferase that specifically methylates the N(7) position of a guanine in 18S rRNA. Requires the methyltransferase adapter protein TRM112 for full rRNA methyltransferase activity. Important for biogenesis end export of the 40S ribosomal subunit independent on its methyltransferase activity. Involved in the pre-rRNA processing steps in the nucleolus leading to small-subunit rRNA production independently of its RNA-modifying catalytic activity. Supports cell proliferation. Required for the initiation of lateral root primordia formation and for the root apical meristem (RAM) organization as well as for leaves development. During callus formation from hypocotyl and root explants, required for the initial stage of reactivation of cell proliferation in the hypocotyl stele. Involved in leaf polarity establishment by functioning cooperatively with AS2 to repress abaxial genes ARF3, ARF4, KAN1, KAN2, YAB1 and YAB5, and the knox homeobox genes KNAT1, KNAT2, KNAT6, and STM to promote adaxial development in leaf primordia at shoot apical meristems at high temperatures. The chain is 18S rRNA (guanine-N(7))-methyltransferase RID2 from Arabidopsis thaliana (Mouse-ear cress).